A 350-amino-acid chain; its full sequence is S-adenosylmethionine:tRNA ribosyltransferase-isomerase (350 aa).

This sequence belongs to the QueA family. In terms of assembly, monomer.

The protein resides in the cytoplasm. It carries out the reaction 7-aminomethyl-7-carbaguanosine(34) in tRNA + S-adenosyl-L-methionine = epoxyqueuosine(34) in tRNA + adenine + L-methionine + 2 H(+). The protein operates within tRNA modification; tRNA-queuosine biosynthesis. Its function is as follows. Transfers and isomerizes the ribose moiety from AdoMet to the 7-aminomethyl group of 7-deazaguanine (preQ1-tRNA) to give epoxyqueuosine (oQ-tRNA). The protein is S-adenosylmethionine:tRNA ribosyltransferase-isomerase of Saccharophagus degradans (strain 2-40 / ATCC 43961 / DSM 17024).